The sequence spans 718 residues: Adhesin-like cell surface protein MAD1 (718 aa).

A signal peptide spans Met1–Ala19. Tandem repeats lie at residues Pro217–Ala243, Pro244–Ala265, Pro266–Ala282, Pro283–Ala309, Pro310–Ala336, Pro337–Ala358, Pro359–Ala382, Pro383–Ala402, and Pro403–Thr420. The tract at residues Thr452–Thr472 is disordered. The region spanning Ser462–Ala575 is the CFEM domain. 3 disulfide bridges follow: Cys494–Cys526, Cys504–Cys512, and Cys514–Cys548. Asp509 is a heme binding site. Gly693 carries GPI-anchor amidated glycine lipidation. A propeptide spans Ala694 to Ala718 (removed in mature form).

It belongs to the RBT5 family. The GPI-anchor is attached to the protein in the endoplasmic reticulum and serves to target the protein to the cell surface. There, the glucosamine-inositol phospholipid moiety is cleaved off and the GPI-modified mannoprotein is covalently attached via its lipidless GPI glycan remnant to the 1,6-beta-glucan of the outer cell wall layer.

The protein resides in the secreted. Its subcellular location is the cell wall. It localises to the cell membrane. Functionally, cell surface adhesion protein that plays a key role in switching between the saprophytic lifestyle and the predacious lifestyle (nematode trapping). Likely functions to prevent energy-consuming trap formation in the absence of nematodes, and keeps the fungus in the saprophytic life style. May influence the induction signal of trap formation by limiting the porosity of the cell wall and thus affecting its permeability of nitrogen source. In Arthrobotrys oligospora (strain ATCC 24927 / CBS 115.81 / DSM 1491) (Nematode-trapping fungus), this protein is Adhesin-like cell surface protein MAD1.